We begin with the raw amino-acid sequence, 150 residues long: Protein E6 (150 aa).

2 zinc fingers span residues 31–67 and 104–140; these read CIWC…CAFC and CALC…CTHC.

The protein belongs to the papillomaviridae E6 protein family. As to quaternary structure, forms homodimers. Interacts with ubiquitin-protein ligase UBE3A/E6-AP; this interaction stimulates UBE3A ubiquitin activity. Interacts with host TP53 and EP300; this interaction inhibits TP53 activity.

The protein resides in the host cytoplasm. Its subcellular location is the host nucleus. Functionally, plays a major role in the induction and maintenance of cellular transformation. E6 associates with host UBE3A/E6-AP ubiquitin-protein ligase and modulates its activity. Sequesters tumor suppressor TP53 in the host cytoplasm and modulates its activity by interacting with host EP300 that results in the reduction of TP53 acetylation and activation. In turn, apoptosis induced by DNA damage is inhibited. E6 also protects host keratinocytes from apoptosis by mediating the degradation of host BAK1. May also inhibit host immune response. The chain is Protein E6 from Homo sapiens (Human).